A 123-amino-acid chain; its full sequence is Large ribosomal subunit protein bL12 (123 aa).

It belongs to the bacterial ribosomal protein bL12 family. As to quaternary structure, homodimer. Part of the ribosomal stalk of the 50S ribosomal subunit. Forms a multimeric L10(L12)X complex, where L10 forms an elongated spine to which 2 to 4 L12 dimers bind in a sequential fashion. Binds GTP-bound translation factors.

In terms of biological role, forms part of the ribosomal stalk which helps the ribosome interact with GTP-bound translation factors. Is thus essential for accurate translation. The protein is Large ribosomal subunit protein bL12 of Haemophilus influenzae (strain 86-028NP).